Reading from the N-terminus, the 294-residue chain is 4-hydroxy-tetrahydrodipicolinate synthase (294 aa).

Thr-45 lines the pyruvate pocket. Tyr-133 acts as the Proton donor/acceptor in catalysis. The active-site Schiff-base intermediate with substrate is the Lys-162. Val-204 is a pyruvate binding site.

It belongs to the DapA family. Homotetramer; dimer of dimers.

It is found in the cytoplasm. The catalysed reaction is L-aspartate 4-semialdehyde + pyruvate = (2S,4S)-4-hydroxy-2,3,4,5-tetrahydrodipicolinate + H2O + H(+). It functions in the pathway amino-acid biosynthesis; L-lysine biosynthesis via DAP pathway; (S)-tetrahydrodipicolinate from L-aspartate: step 3/4. Functionally, catalyzes the condensation of (S)-aspartate-beta-semialdehyde [(S)-ASA] and pyruvate to 4-hydroxy-tetrahydrodipicolinate (HTPA). The sequence is that of 4-hydroxy-tetrahydrodipicolinate synthase from Bartonella bacilliformis (strain ATCC 35685 / KC583 / Herrer 020/F12,63).